The chain runs to 379 residues: Alanine racemase (379 aa).

Catalysis depends on Lys-35, which acts as the Proton acceptor; specific for D-alanine. At Lys-35 the chain carries N6-(pyridoxal phosphate)lysine. Arg-133 is a substrate binding site. The active-site Proton acceptor; specific for L-alanine is Tyr-265. Met-312 lines the substrate pocket.

The protein belongs to the alanine racemase family. Pyridoxal 5'-phosphate is required as a cofactor.

The catalysed reaction is L-alanine = D-alanine. It functions in the pathway amino-acid biosynthesis; D-alanine biosynthesis; D-alanine from L-alanine: step 1/1. Functionally, catalyzes the interconversion of L-alanine and D-alanine. May also act on other amino acids. The polypeptide is Alanine racemase (alr) (Treponema denticola (strain ATCC 35405 / DSM 14222 / CIP 103919 / JCM 8153 / KCTC 15104)).